Consider the following 126-residue polypeptide: Glycine cleavage system H protein (126 aa).

In terms of domain architecture, Lipoyl-binding spans 23 to 104 (TLTVGITDHA…PYDNWLFKIK (82 aa)). N6-lipoyllysine is present on Lys64.

The protein belongs to the GcvH family. The glycine cleavage system is composed of four proteins: P, T, L and H. (R)-lipoate serves as cofactor.

The glycine cleavage system catalyzes the degradation of glycine. The H protein shuttles the methylamine group of glycine from the P protein to the T protein. This chain is Glycine cleavage system H protein, found in Paraburkholderia phymatum (strain DSM 17167 / CIP 108236 / LMG 21445 / STM815) (Burkholderia phymatum).